A 237-amino-acid polypeptide reads, in one-letter code: Large ribosomal subunit protein uL1 (237 aa).

The protein belongs to the universal ribosomal protein uL1 family. Part of the 50S ribosomal subunit.

In terms of biological role, binds directly to 23S rRNA. The L1 stalk is quite mobile in the ribosome, and is involved in E site tRNA release. Functionally, protein L1 is also a translational repressor protein, it controls the translation of the L11 operon by binding to its mRNA. This is Large ribosomal subunit protein uL1 from Dehalococcoides mccartyi (strain ATCC BAA-2100 / JCM 16839 / KCTC 5957 / BAV1).